The chain runs to 137 residues: Small ribosomal subunit protein uS12 (137 aa).

The disordered stretch occupies residues 1 to 23 (MPTINQLVRKGRKSKSSKSDAPA). Residue D102 is modified to 3-methylthioaspartic acid.

The protein belongs to the universal ribosomal protein uS12 family. Part of the 30S ribosomal subunit. Contacts proteins S8 and S17. May interact with IF1 in the 30S initiation complex.

Functionally, with S4 and S5 plays an important role in translational accuracy. Its function is as follows. Interacts with and stabilizes bases of the 16S rRNA that are involved in tRNA selection in the A site and with the mRNA backbone. Located at the interface of the 30S and 50S subunits, it traverses the body of the 30S subunit contacting proteins on the other side and probably holding the rRNA structure together. The combined cluster of proteins S8, S12 and S17 appears to hold together the shoulder and platform of the 30S subunit. This Levilactobacillus brevis (strain ATCC 367 / BCRC 12310 / CIP 105137 / JCM 1170 / LMG 11437 / NCIMB 947 / NCTC 947) (Lactobacillus brevis) protein is Small ribosomal subunit protein uS12.